The sequence spans 427 residues: Enolase (427 aa).

Gln-163 serves as a coordination point for (2R)-2-phosphoglycerate. The Proton donor role is filled by Glu-205. Mg(2+) is bound by residues Asp-242, Glu-285, and Asp-312. (2R)-2-phosphoglycerate-binding residues include Lys-337, Arg-366, Ser-367, and Lys-388. Lys-337 (proton acceptor) is an active-site residue.

It belongs to the enolase family. Requires Mg(2+) as cofactor.

It is found in the cytoplasm. Its subcellular location is the secreted. The protein localises to the cell surface. The catalysed reaction is (2R)-2-phosphoglycerate = phosphoenolpyruvate + H2O. It participates in carbohydrate degradation; glycolysis; pyruvate from D-glyceraldehyde 3-phosphate: step 4/5. In terms of biological role, catalyzes the reversible conversion of 2-phosphoglycerate (2-PG) into phosphoenolpyruvate (PEP). It is essential for the degradation of carbohydrates via glycolysis. The polypeptide is Enolase (Ralstonia pickettii (strain 12J)).